A 114-amino-acid chain; its full sequence is Anti-adapter protein IraM (114 aa).

The protein belongs to the IraM/RssC family.

The protein localises to the cytoplasm. Functionally, involved in the stabilization of the sigma stress factor RpoS. The sequence is that of Anti-adapter protein IraM from Citrobacter koseri (strain ATCC BAA-895 / CDC 4225-83 / SGSC4696).